A 391-amino-acid chain; its full sequence is Autotransporter heptosyltransferase Aah (391 aa).

ADP-D-glycero-beta-D-manno-heptose is bound by residues Thr101, Leu102, and Gly103. Residue Asp104 is the Proton acceptor of the active site. The ADP-D-glycero-beta-D-manno-heptose site is built by Gln218, Thr220, Lys224, Arg251, Leu275, Gly296, and Glu320. Fe(3+) is bound by residues Cys333, Cys336, Cys352, and Cys364.

The protein belongs to the glycosyltransferase 9 family. In terms of assembly, homododecamer composed of 6 homodimers forming a ring. Fe(3+) serves as cofactor.

It is found in the cytoplasm. The catalysed reaction is ADP-D-glycero-beta-D-manno-heptose + L-seryl-[protein] = O-(D-glycero-alpha-D-manno-heptosyl)-L-seryl-[protein] + ADP + H(+). It carries out the reaction ADP-L-glycero-beta-D-manno-heptose + L-seryl-[protein] = O-(L-glycero-alpha-D-manno-heptosyl)-L-seryl-[protein] + ADP + H(+). Its function is as follows. Glycosylates autotransporter AIDA-I. Catalyzes the addition of both L, D-heptose and D, D-heptose sugars. Probably by glycosylating AIDA-I, involved in bacteria adhesion to host mammalian cells. In Escherichia coli, this protein is Autotransporter heptosyltransferase Aah.